Here is a 254-residue protein sequence, read N- to C-terminus: Ribosomal RNA small subunit methyltransferase J (254 aa).

S-adenosyl-L-methionine is bound by residues 101 to 102, 117 to 118, 153 to 154, and Asp-171; these read RD, ER, and SS.

The protein belongs to the methyltransferase superfamily. RsmJ family.

It is found in the cytoplasm. It catalyses the reaction guanosine(1516) in 16S rRNA + S-adenosyl-L-methionine = N(2)-methylguanosine(1516) in 16S rRNA + S-adenosyl-L-homocysteine + H(+). In terms of biological role, specifically methylates the guanosine in position 1516 of 16S rRNA. In Enterobacter sp. (strain 638), this protein is Ribosomal RNA small subunit methyltransferase J.